The primary structure comprises 104 residues: L-rhamnose mutarotase (104 aa).

Tyr18 contacts substrate. His22 (proton donor) is an active-site residue. Substrate is bound by residues Tyr41 and 76–77 (WW).

Belongs to the rhamnose mutarotase family. In terms of assembly, homodimer.

The protein resides in the cytoplasm. The enzyme catalyses alpha-L-rhamnose = beta-L-rhamnose. Its pathway is carbohydrate metabolism; L-rhamnose metabolism. Functionally, involved in the anomeric conversion of L-rhamnose. The sequence is that of L-rhamnose mutarotase from Escherichia coli O17:K52:H18 (strain UMN026 / ExPEC).